The following is a 408-amino-acid chain: Bifunctional polynucleotide phosphatase/kinase (408 aa).

The interval 1–38 (MSSKKRKSPPQESLTSYFEKSSKSSKKYGSQNKDSDSS) is disordered. At serine 8 the chain carries Phosphoserine. Composition is skewed to polar residues over residues 10 to 19 (PQESLTSYFE) and 28 to 38 (YGSQNKDSDSS). 263–270 (GFPSSGKS) lines the ATP pocket.

The protein in the N-terminal section; belongs to the DNA 3' phosphatase family.

Its subcellular location is the nucleus. It catalyses the reaction a 3'end (2'-deoxyribonucleotide 3'-phosphate)-DNA + H2O = a 3'-end 2'-deoxyribonucleotide-DNA + phosphate. The enzyme catalyses a 5'-end dephospho-2'-deoxyribonucleoside-DNA + ATP = a 5'-end 5'-phospho-2'-deoxyribonucleoside-DNA + ADP + H(+). Its function is as follows. Catalyzes the phosphorylation of DNA at 5'-hydroxyl termini and can dephosphorylate its 3'-phosphate termini. Has a role in the repair of breaks in single-stranded DNA. The chain is Bifunctional polynucleotide phosphatase/kinase (pnk1) from Schizosaccharomyces pombe (strain 972 / ATCC 24843) (Fission yeast).